Here is a 1360-residue protein sequence, read N- to C-terminus: Ubiquitin carboxyl-terminal hydrolase 19 (1360 aa).

The segment at 1 to 46 (MSAGASATGPRRGPPGLEEATSKKKQKDRANLESKDGDARRVSLPR) is disordered. Over 1 to 1333 (MSAGASATGP…TTPDEGCLRY (1333 aa)) the chain is Cytoplasmic. A compositionally biased stretch (basic and acidic residues) spans 28–46 (DRANLESKDGDARRVSLPR). Positions 51 to 140 (KDELLLDWRQ…VPLLTWPSLL (90 aa)) constitute a CS 1 domain. Residues 163–239 (PIALEPGSEP…APSFLSDSAT (77 aa)) are disordered. Residues 170–181 (SEPRRAKQEARN) show a composition bias toward basic and acidic residues. Residues 189-199 (GEVGSGAGPGT) are compositionally biased toward gly residues. Ser220 is modified (phosphoserine). Positions 322 to 424 (LAFVKNDSYE…RQSQRWGGLE (103 aa)) constitute a CS 2 domain. Residues 432–482 (VGGAKVAVPTGPTPLDSTPPGGGPHPLTGQEEARAVEKEKPKARSEDSGLD) form a disordered region. A compositionally biased stretch (basic and acidic residues) spans 462–478 (EEARAVEKEKPKARSED). The 718-residue stretch at 539–1256 (TGLVNLGNTC…YAYVLFYRRR (718 aa)) folds into the USP domain. Residue Cys548 is the Nucleophile of the active site. Positions 833, 836, 850, 853, 859, 863, 871, and 875 each coordinate Zn(2+). The MYND-type zinc finger occupies 833–875 (CAACQRKQQSEEEKLKRCTRCYRVGYCNQFCQKTHWPDHKGLC). The interval 965 to 988 (DTGAHRVWPPADRGPVPSTSGLSS) is disordered. The active-site Proton acceptor is His1207. Over residues 1259–1274 (PVERPPRASHSEHHPD) the composition is skewed to basic and acidic residues. Residues 1259-1281 (PVERPPRASHSEHHPDLGPAAEA) form a disordered region. Residues 1334-1354 (FVLGTVAALVALVLNVFYPLV) form a helical membrane-spanning segment. Residues 1355-1360 (SQSRWR) are Lumenal-facing.

As to quaternary structure, interacts with RNF123. Interacts with BIRC2/c-IAP1, BIRC3/c-IAP2 and XIAP/BIRC4. Interacts with HIF1A (via N-terminus).

The protein resides in the endoplasmic reticulum membrane. The catalysed reaction is Thiol-dependent hydrolysis of ester, thioester, amide, peptide and isopeptide bonds formed by the C-terminal Gly of ubiquitin (a 76-residue protein attached to proteins as an intracellular targeting signal).. Its function is as follows. Deubiquitinating enzyme that regulates the degradation of various proteins by removing ubiquitin moieties, thereby preventing their proteasomal degradation. Stabilizes RNF123, which promotes CDKN1B degradation and contributes to cell proliferation. Decreases the levels of ubiquitinated proteins during skeletal muscle formation and acts to repress myogenesis. Modulates transcription of major myofibrillar proteins. Also involved in turnover of endoplasmic-reticulum-associated degradation (ERAD) substrates. Mechanistically, deubiquitinates and thereby stabilizes several E3 ligases involved in the ERAD pathway including SYVN1 or MARCHF6. Regulates the stability of other E3 ligases including BIRC2/c-IAP1 and BIRC3/c-IAP2 by preventing their ubiquitination. Required for cells to mount an appropriate response to hypoxia by rescuing HIF1A from degradation in a non-catalytic manner and by mediating the deubiquitination of FUNDC1. Attenuates mitochondrial damage and ferroptosis by targeting and stabilizing NADPH oxidase 4/NOX4. Negatively regulates TNF-alpha- and IL-1beta-triggered NF-kappa-B activation by hydrolyzing 'Lys-27'- and 'Lys-63'-linked polyubiquitin chains from MAP3K7. Modulates also the protein level and aggregation of polyQ-expanded huntingtin/HTT through HSP90AA1. This chain is Ubiquitin carboxyl-terminal hydrolase 19 (Usp19), found in Mus musculus (Mouse).